A 591-amino-acid polypeptide reads, in one-letter code: PDZ and LIM domain protein 5 (591 aa).

Ser-2 is subject to N-acetylserine. Ser-2 is subject to Phosphoserine. Residues 2 to 85 (SNYSVSLVGP…SLNMTLQRAS (84 aa)) enclose the PDZ domain. At Lys-89 the chain carries N6-acetyllysine; alternate. Position 89 is an N6-succinyllysine; alternate (Lys-89). Lys-89 is covalently cross-linked (Glycyl lysine isopeptide (Lys-Gly) (interchain with G-Cter in SUMO2); alternate). Glu-102, Lys-105, Ser-111, Ser-134, and Ser-137 each carry phosphoserine. Disordered regions lie at residues 121–166 (TNMA…PTPV) and 186–398 (SADQ…DQDT). Positions 134–143 (SVSSPKVTSI) are enriched in polar residues. Residues 144 to 166 (PSPSSAFTPAHAATSSHASPTPV) show a composition bias toward low complexity. 2 stretches are compositionally biased toward polar residues: residues 186–195 (SADQCSSPPN) and 205–217 (RQPTVTSVCSESA). Gln-218, Ser-228, and Ser-260 each carry phosphoserine. Basic and acidic residues-rich tracts occupy residues 258–273 (DASKKRLIEDTEDWRP) and 294–304 (HLTESENDNTK). Low complexity predominate over residues 310-339 (QEPSQQPASSGASPLSASEGPESPGSSRPS). Residues Ser-313, Pro-316, and Ser-322 each carry the phosphoserine modification. The residue at position 350 (Lys-350) is an N6-acetyllysine. A compositionally biased stretch (polar residues) spans 353–385 (GSTSVKSPSWQRPNQAAPSTGRISNNARSSGTG). Residues Ser-359 and Ser-361 each carry the phosphoserine modification. LIM zinc-binding domains follow at residues 413-472 (PMCA…FFAP), 472-531 (PECG…LFGT), and 531-591 (TICR…SVNF).

In terms of assembly, interacts with various PKC isoforms through the LIM domains. Interacts with actin and alpha-actinin through the PDZ domain. Interacts (via LIM domains) with SIPA1L1/SPAR; this interaction may occur preferentially with isoform 1.

Its subcellular location is the postsynaptic density. The protein localises to the presynapse. The protein resides in the postsynapse. It localises to the cytoplasm. It is found in the cytosol. In terms of biological role, may play an important role in the heart development by scaffolding PKC to the Z-disk region. May play a role in the regulation of cardiomyocyte expansion. Isoforms lacking the LIM domains may negatively modulate the scaffolding activity of isoform 1. Overexpression promotes the development of heart hypertrophy. Contributes to the regulation of dendritic spine morphogenesis in neurons. May be required to restrain postsynaptic growth of excitatory synapses. Isoform 1, but not isoform 2, expression favors spine thinning and elongation. This chain is PDZ and LIM domain protein 5, found in Mus musculus (Mouse).